A 147-amino-acid chain; its full sequence is Sec-independent protein translocase protein TatB (147 aa).

Residues 1-21 (MFDFGFSELIVIAVVTLIVVG) traverse the membrane as a helical segment. Positions 117–147 (APAPMSLAPHGDAASAGREPAAVPGSGPEKA) are disordered.

Belongs to the TatB family. In terms of assembly, the Tat system comprises two distinct complexes: a TatABC complex, containing multiple copies of TatA, TatB and TatC subunits, and a separate TatA complex, containing only TatA subunits. Substrates initially bind to the TatABC complex, which probably triggers association of the separate TatA complex to form the active translocon.

Its subcellular location is the cell inner membrane. Functionally, part of the twin-arginine translocation (Tat) system that transports large folded proteins containing a characteristic twin-arginine motif in their signal peptide across membranes. Together with TatC, TatB is part of a receptor directly interacting with Tat signal peptides. TatB may form an oligomeric binding site that transiently accommodates folded Tat precursor proteins before their translocation. The protein is Sec-independent protein translocase protein TatB of Aromatoleum aromaticum (strain DSM 19018 / LMG 30748 / EbN1) (Azoarcus sp. (strain EbN1)).